A 761-amino-acid chain; its full sequence is MLIQKILLNKEISRLPRILSILNYTGLRWLSGSSGRNTTELQRIFDDSKYWQSLSENTTQYTKETGLFKNPYLTSTDGLRQFSHDSLHKAHKLAEILRNSVSKEEKVHYIMNLDQLSDTLCRVIDLCEFLRSAHPDQSYVEAAQMCHEEMFEFMNVLNTDVVLCNKLKEVLEDPEILKVLSEEERKVGEILLDDFEKSGIYMKAGIREQFIELSQQISVIGQEFINNTDYVAKEFIKVKRDEMDKSGISPLLTARLNRDLTGKYYKIPTYGQIPLQILKSCPDEDIRKEVWAALHNCPKAQIQRLNQLVRLRVILSNLLGKQSYSDYQLDNKMAGSPENVKGFIKTLMNVTKPLAARELEFIARDKLNAPDSRHMSDNEILSIVKPWDKNYFSSKYDSDNEMAMIRDEQLRYYFSLGNVINGLSELFKRIYGITLQPSRTENGETWSPDVRRLDVISEEEGLVGVIYCDLFERVGKISNPAHFTVCCSRQVYPDENDFTTIQTGQNSDGTVFQLPVISLVCNFSTVALPNGNRTCFLHMNEIETLFHEMGHAMHSMLGRTRLQNISGTRCATDFVELPSILMEHFARDIRVLRTIGSHYETSEPAPEALLNDYLDKTQFLQHCETYSQAKMAMLDQKLHGSFSLSDIERIDSAKIYQKLETRLQVLADDESNWCGRFGHLFGYGATYYSYLFDRAIASKVWDSLFKDDPFNRTGGEKFKERVLKWGGLKNPWSCIADVLEKPDLAKGGAEAMTYIGDSEDL.

The N-terminal 37 residues, 1 to 37 (MLIQKILLNKEISRLPRILSILNYTGLRWLSGSSGRN), are a transit peptide targeting the mitochondrion. Histidine 547 provides a ligand contact to Zn(2+). Glutamate 548 is an active-site residue. Histidine 551 and histidine 554 together coordinate Zn(2+).

Belongs to the peptidase M3 family. The cofactor is Zn(2+).

It is found in the mitochondrion matrix. The enzyme catalyses Release of an N-terminal octapeptide as second stage of processing of some proteins imported into the mitochondrion.. Its function is as follows. Cleaves proteins, imported into the mitochondrion, to their mature size. While most mitochondrial precursor proteins are processed to the mature form in one step by mitochondrial processing peptidase (MPP), the sequential cleavage by MIP of an octapeptide after initial processing by MPP is a required step for a subgroup of nuclear-encoded precursor proteins destined for the matrix or the inner membrane. This Candida glabrata (strain ATCC 2001 / BCRC 20586 / JCM 3761 / NBRC 0622 / NRRL Y-65 / CBS 138) (Yeast) protein is Mitochondrial intermediate peptidase (OCT1).